Here is a 124-residue protein sequence, read N- to C-terminus: Small ribosomal subunit protein bS6m (124 aa).

Belongs to the bacterial ribosomal protein bS6 family. In terms of assembly, component of the mitochondrial ribosome small subunit (28S) which comprises a 12S rRNA and about 30 distinct proteins.

It is found in the mitochondrion. The protein is Small ribosomal subunit protein bS6m (MRPS6) of Bos taurus (Bovine).